Consider the following 515-residue polypeptide: Maturase K (515 aa).

It belongs to the intron maturase 2 family. MatK subfamily.

Its subcellular location is the plastid. It is found in the chloroplast. Usually encoded in the trnK tRNA gene intron. Probably assists in splicing its own and other chloroplast group II introns. This is Maturase K from Helonias bullata (Swamp pink).